We begin with the raw amino-acid sequence, 418 residues long: MLQLIATPSNALADEPVSIRAIGLPPSQIVTITATVKDEKENLFQSKAFYKANEAGEVDLEQASALGGDYVGVHPMGLFCCLKPKRAFQRLIKKDVMNSPLCICLDLYDSVCWLETVRIPPKASQIVHRWFAGPGVKREQIREGRVRGALFLPPGKGPFPGIIDLFGSIGGLVEFRASLLASRGFAVLALAYFAYEDLPKVLLEEDLDYFEEAANFLLAHPKIQQPGIGVISVSKGAEIGLAMACYLKQVVATVCINGPSAIFDFPLKYRDLVVTPMRLAFEKIQFHGSGAACFRHCWDPQNMLNPPKILPVEKAQGKILFIVGENDQCLASKLHAQRAMDRLRSHGRSSGRMLAYPGAGHLIEPPYSPFCFACWDSVLGKPMLWGGDPIAHAAAQVHSWREIQKFFRQHLLQSGGKL.

Residues serine 234, aspartate 327, and histidine 361 each act as charge relay system in the active site. Residues 416-418 (GKL) carry the Microbody targeting signal motif.

Belongs to the C/M/P thioester hydrolase family.

Its subcellular location is the peroxisome. Functionally, acyltransferase which efficiently conjugates very long-chain and long-chain fatty acids to taurine. Shows no conjugation activity in the presence of glycine. This is Acyl-coenzyme A amino acid N-acyltransferase 2 from Rattus norvegicus (Rat).